The following is a 430-amino-acid chain: Serine--tRNA ligase (430 aa).

L-serine is bound at residue 237–239 (TAE). ATP is bound at residue 268–270 (RSE). E291 contributes to the L-serine binding site. Residue 355 to 358 (EISS) coordinates ATP. S391 contacts L-serine.

It belongs to the class-II aminoacyl-tRNA synthetase family. Type-1 seryl-tRNA synthetase subfamily. As to quaternary structure, homodimer. The tRNA molecule binds across the dimer.

The protein localises to the cytoplasm. It catalyses the reaction tRNA(Ser) + L-serine + ATP = L-seryl-tRNA(Ser) + AMP + diphosphate + H(+). The catalysed reaction is tRNA(Sec) + L-serine + ATP = L-seryl-tRNA(Sec) + AMP + diphosphate + H(+). Its pathway is aminoacyl-tRNA biosynthesis; selenocysteinyl-tRNA(Sec) biosynthesis; L-seryl-tRNA(Sec) from L-serine and tRNA(Sec): step 1/1. Functionally, catalyzes the attachment of serine to tRNA(Ser). Is also able to aminoacylate tRNA(Sec) with serine, to form the misacylated tRNA L-seryl-tRNA(Sec), which will be further converted into selenocysteinyl-tRNA(Sec). The polypeptide is Serine--tRNA ligase (Klebsiella pneumoniae (strain 342)).